A 398-amino-acid polypeptide reads, in one-letter code: 1-deoxy-D-xylulose 5-phosphate reductoisomerase (398 aa).

Residues T11, G12, S13, I14, R38, N39, and N125 each coordinate NADPH. K126 serves as a coordination point for 1-deoxy-D-xylulose 5-phosphate. E127 provides a ligand contact to NADPH. D151 lines the Mn(2+) pocket. 1-deoxy-D-xylulose 5-phosphate is bound by residues S152, E153, S179, and H202. E153 is a binding site for Mn(2+). G208 contributes to the NADPH binding site. 1-deoxy-D-xylulose 5-phosphate-binding residues include S215, N220, K221, and E224. E224 lines the Mn(2+) pocket.

This sequence belongs to the DXR family. Mg(2+) serves as cofactor. Requires Mn(2+) as cofactor.

The enzyme catalyses 2-C-methyl-D-erythritol 4-phosphate + NADP(+) = 1-deoxy-D-xylulose 5-phosphate + NADPH + H(+). It participates in isoprenoid biosynthesis; isopentenyl diphosphate biosynthesis via DXP pathway; isopentenyl diphosphate from 1-deoxy-D-xylulose 5-phosphate: step 1/6. Its function is as follows. Catalyzes the NADPH-dependent rearrangement and reduction of 1-deoxy-D-xylulose-5-phosphate (DXP) to 2-C-methyl-D-erythritol 4-phosphate (MEP). The polypeptide is 1-deoxy-D-xylulose 5-phosphate reductoisomerase (Burkholderia lata (strain ATCC 17760 / DSM 23089 / LMG 22485 / NCIMB 9086 / R18194 / 383)).